A 363-amino-acid chain; its full sequence is Cytochrome b (363 aa).

Transmembrane regions (helical) follow at residues 23-43 (VGFI…LLTF), 67-89 (WFVR…IHII), 102-122 (SWYS…TGYV), and 164-184 (FFIL…LHLY). 2 residues coordinate heme b: H73 and H87. Heme b is bound by residues H168 and H182. Residue H187 participates in a ubiquinone binding. 4 consecutive transmembrane segments (helical) span residues 210 to 230 (ILFS…PQVG), 271 to 291 (VFPT…LLII), 309 to 329 (RVWT…GCIG), and 332 to 352 (VINL…TTFV).

The protein belongs to the cytochrome b family. As to quaternary structure, the main subunits of complex b-c1 are: cytochrome b, cytochrome c1 and the Rieske protein. Heme b is required as a cofactor.

It localises to the mitochondrion inner membrane. Its function is as follows. Component of the ubiquinol-cytochrome c reductase complex (complex III or cytochrome b-c1 complex) that is part of the mitochondrial respiratory chain. The b-c1 complex mediates electron transfer from ubiquinol to cytochrome c. Contributes to the generation of a proton gradient across the mitochondrial membrane that is then used for ATP synthesis. The polypeptide is Cytochrome b (MT-CYB) (Theileria parva (East coast fever infection agent)).